The following is an 861-amino-acid chain: Ribosome biogenesis protein BOP1 homolog (861 aa).

Residues 1–237 (MVANKSKATK…GDTSDEEDIR (237 aa)) form a disordered region. Residues 29–45 (NGRSTKQPEADSDQSAS) are compositionally biased toward polar residues. 2 stretches are compositionally biased toward acidic residues: residues 62-77 (DDGDSSDSEGEGDASD) and 87-143 (SDSD…EDLA). Composition is skewed to basic and acidic residues over residues 144 to 156 (EPEKPRAIKEGSK), 174 to 190 (ETKKLLEAAAKEDEKLA), and 212 to 223 (PERKTGRLKNSD). WD repeat units follow at residues 522-561 (GHTDMIRTISIEPKGEYLVTGSDDKTIKIWEVSTARCIKT), 563-603 (PTGD…CLLS), 692-730 (KSKGLIQCVLFHPVKPCLFVATQRHIRVYDLVKQELLKK), 733-772 (PSCKWISSMAIHPKGDNLLVATYEKKMMWFDLDLSTRPYQ), 776-815 (LHFSAIRNVAFHQRYPLFASASDDRSVIVSHGMVYNDLMQ), and 831-861 (VNDFGAFDVVFHPTQPWLFSSGADNTVRLYT).

This sequence belongs to the WD repeat BOP1/ERB1 family.

The protein resides in the nucleus. It is found in the nucleolus. The protein localises to the nucleoplasm. In terms of biological role, required for maturation of ribosomal RNAs and formation of the large ribosomal subunit. This is Ribosome biogenesis protein BOP1 homolog from Culex quinquefasciatus (Southern house mosquito).